The primary structure comprises 241 residues: GDSL esterase/lipase At5g45920 (241 aa).

Catalysis depends on S12, which acts as the Nucleophile. Catalysis depends on residues D189 and H192.

It belongs to the 'GDSL' lipolytic enzyme family.

This Arabidopsis thaliana (Mouse-ear cress) protein is GDSL esterase/lipase At5g45920.